We begin with the raw amino-acid sequence, 132 residues long: MSKIDSIIEMIEGLNVLELVELKKKMEEKWGVTAAAPVMAMGAAMPVAAAGDGAAAAAPVEEKTEFDVILKEAGPNKIQVIKVVRELTSLGLKEAKDLVEGAPKPVREGVSKEEAEAAKAKLTEAGAVVEIK.

The protein belongs to the bacterial ribosomal protein bL12 family. As to quaternary structure, homodimer. Part of the ribosomal stalk of the 50S ribosomal subunit. Forms a multimeric L10(L12)X complex, where L10 forms an elongated spine to which 2 to 4 L12 dimers bind in a sequential fashion. Binds GTP-bound translation factors.

Its function is as follows. Forms part of the ribosomal stalk which helps the ribosome interact with GTP-bound translation factors. Is thus essential for accurate translation. In Chloroflexus aurantiacus (strain ATCC 29366 / DSM 635 / J-10-fl), this protein is Large ribosomal subunit protein bL12.